Reading from the N-terminus, the 196-residue chain is Homeobox protein XENK-2 (196 aa).

Residues 48–72 are disordered; it reads PSADESPDNDKELSSNPDSGKKRKR. A DNA-binding region (homeobox) is located at residues 69 to 128; it reads KRKRRVLFSKAQTYELERRFRQQRYLSAPEREHLASLIRLTPTQVKIWFQNHRYKMKRAR.

The protein belongs to the NK-2 homeobox family. In terms of tissue distribution, forebrain and midbrain.

It localises to the nucleus. Defines dorsal-ventral domains in developing brain. May play a role in defining positional information along the anterior-posterior (a/p) axis and the dorsal-ventral (d/v) axis of the developing nervous system. May be involved in determining positional or boundary information rather than determining a given cell type. In Xenopus laevis (African clawed frog), this protein is Homeobox protein XENK-2.